The chain runs to 185 residues: ATP-dependent protease subunit HslV (185 aa).

The active site involves Thr-12. Residues Ala-168, Cys-171, and Thr-174 each coordinate Na(+).

This sequence belongs to the peptidase T1B family. HslV subfamily. A double ring-shaped homohexamer of HslV is capped on each side by a ring-shaped HslU homohexamer. The assembly of the HslU/HslV complex is dependent on binding of ATP.

Its subcellular location is the cytoplasm. It catalyses the reaction ATP-dependent cleavage of peptide bonds with broad specificity.. Allosterically activated by HslU binding. Its function is as follows. Protease subunit of a proteasome-like degradation complex believed to be a general protein degrading machinery. The chain is ATP-dependent protease subunit HslV from Cereibacter sphaeroides (strain ATCC 17023 / DSM 158 / JCM 6121 / CCUG 31486 / LMG 2827 / NBRC 12203 / NCIMB 8253 / ATH 2.4.1.) (Rhodobacter sphaeroides).